A 400-amino-acid chain; its full sequence is Enoyl-[acyl-carrier-protein] reductase [NADH] (400 aa).

Residues 48–53 (GSSSGY), 74–75 (FE), 111–112 (DA), and 139–140 (LA) contribute to the NAD(+) site. Tyr225 provides a ligand contact to substrate. The active-site Proton donor is the Tyr235. Residues Lys244 and 273 to 275 (VVT) contribute to the NAD(+) site.

Belongs to the TER reductase family. In terms of assembly, monomer.

It catalyses the reaction a 2,3-saturated acyl-[ACP] + NAD(+) = a (2E)-enoyl-[ACP] + NADH + H(+). The protein operates within lipid metabolism; fatty acid biosynthesis. Functionally, involved in the final reduction of the elongation cycle of fatty acid synthesis (FAS II). Catalyzes the reduction of a carbon-carbon double bond in an enoyl moiety that is covalently linked to an acyl carrier protein (ACP). This Shewanella baltica (strain OS185) protein is Enoyl-[acyl-carrier-protein] reductase [NADH].